We begin with the raw amino-acid sequence, 267 residues long: Tryptophan synthase alpha chain (267 aa).

Catalysis depends on proton acceptor residues Glu47 and Asp58.

This sequence belongs to the TrpA family. Tetramer of two alpha and two beta chains.

It carries out the reaction (1S,2R)-1-C-(indol-3-yl)glycerol 3-phosphate + L-serine = D-glyceraldehyde 3-phosphate + L-tryptophan + H2O. It functions in the pathway amino-acid biosynthesis; L-tryptophan biosynthesis; L-tryptophan from chorismate: step 5/5. In terms of biological role, the alpha subunit is responsible for the aldol cleavage of indoleglycerol phosphate to indole and glyceraldehyde 3-phosphate. This is Tryptophan synthase alpha chain from Chlorobaculum parvum (strain DSM 263 / NCIMB 8327) (Chlorobium vibrioforme subsp. thiosulfatophilum).